The sequence spans 404 residues: MPSNKSVSDAPITQFVNCRILKNHKLQWEDLWVREGKILNPEKLFFDEQGFADHRVDCENKIIAPGFIDVQLNGGYGIDFSQASSDIRGGVALVAKKILEHGVTSFCPTLVTSPPHIYHKVIPELRVQDGGPEGAGVLGIHLEGPFISEEKRGAHPPKFLRTFQSGGVADLMETYGQLENVAMVTLAPELTNSAAAIHELSSRGITVSVGHSMADLSQAEEAVQNGATFITHLFNAMLPFHHRDPGIVGLLTSDRIPPGRTVYYGMIADGIHTHPAALRIAHRAHPAGLVLVTDAVTAMGLPPGRHTLGQQQIDIQGLHAYVAGTTTLSGSIATMDMCVRHFREASGCTVEAALEAASLHPAQLLGISHRKGTLEFGADADFIVLDDMLTVRETYIAGQQVWRK.

Glu143 contacts a divalent metal cation. Residue 154-155 (AH) participates in substrate binding. Residues His211 and His232 each coordinate a divalent metal cation. Substrate contacts are provided by residues 235 to 236 (NA), Arg243, and 269 to 272 (DGIH). Catalysis depends on Asp294, which acts as the Proton donor/acceptor. 328-330 (LSG) is a substrate binding site.

This sequence belongs to the metallo-dependent hydrolases superfamily. NagA family. A divalent metal cation is required as a cofactor.

The catalysed reaction is N-acetyl-D-glucosamine 6-phosphate + H2O = D-glucosamine 6-phosphate + acetate. It functions in the pathway amino-sugar metabolism; N-acetylneuraminate degradation. In terms of biological role, hydrolyzes the N-glycolyl group from N-glycolylglucosamine 6-phosphate (GlcNGc-6-P) in the N-glycolylneuraminic acid (Neu5Gc) degradation pathway. The chain is N-acetylglucosamine-6-phosphate deacetylase (amdhd2) from Danio rerio (Zebrafish).